Here is a 213-residue protein sequence, read N- to C-terminus: Large ribosomal subunit protein uL23 (213 aa).

The tract at residues 1–117 (MNHNEIIKYP…KSTSELKLEE (117 aa)) is large ribosomal subunit protein uL23. Residues 118–213 (KIAAKIAAKE…TTKKTTTKKV (96 aa)) are unknown.

The protein belongs to the universal ribosomal protein uL23 family. Part of the 50S ribosomal subunit. Contacts protein L29, and trigger factor when it is bound to the ribosome.

One of the early assembly proteins it binds 23S rRNA. One of the proteins that surrounds the polypeptide exit tunnel on the outside of the ribosome. Forms the main docking site for trigger factor binding to the ribosome. This Mycoplasma mobile (strain ATCC 43663 / 163K / NCTC 11711) (Mesomycoplasma mobile) protein is Large ribosomal subunit protein uL23.